The following is a 416-amino-acid chain: Histidine--tRNA ligase (416 aa).

This sequence belongs to the class-II aminoacyl-tRNA synthetase family. In terms of assembly, homodimer.

It is found in the cytoplasm. It carries out the reaction tRNA(His) + L-histidine + ATP = L-histidyl-tRNA(His) + AMP + diphosphate + H(+). The chain is Histidine--tRNA ligase from Dictyoglomus thermophilum (strain ATCC 35947 / DSM 3960 / H-6-12).